The chain runs to 729 residues: Fibroblast growth factor receptor homolog 1 (729 aa).

The signal sequence occupies residues 1–36 (MAAAWSWRASHSTITMTSGSLVVLFLLLSIWQPAVQ). At 37 to 309 (VEGRRQMANS…VASGSLHSTS (273 aa)) the chain is on the extracellular side. Positions 56 to 101 (ARSQNKTPAITNNANQSSTSSADLDDGAADDDDNKADLPVNVSSKP) are disordered. The span at 66 to 77 (TNNANQSSTSSA) shows a compositional bias: low complexity. Asn-70 carries N-linked (GlcNAc...) asparagine glycosylation. Acidic residues predominate over residues 78–89 (DLDDGAADDDDN). Asn-96, Asn-134, Asn-140, Asn-171, Asn-207, Asn-213, Asn-242, Asn-246, and Asn-282 each carry an N-linked (GlcNAc...) asparagine glycan. Ig-like C2-type domains are found at residues 106–192 (PKKM…VIVS) and 203–279 (TGPL…NSLG). Cys-125 and Cys-174 are disulfide-bonded. Cysteines 220 and 272 form a disulfide. The chain crosses the membrane as a helical span at residues 310-330 (FVYIFVFGGLIFIFMTTLFVF). The Cytoplasmic portion of the chain corresponds to 331–729 (YAIRKMKHEK…TDNLQKWCNY (399 aa)). The Protein kinase domain occupies 416–692 (LVLGATLGEG…EIVEYMDKLL (277 aa)). ATP-binding positions include 422-430 (LGEGAFGRV) and Lys-443. Catalysis depends on Asp-556, which acts as the Proton acceptor. Tyr-587 carries the phosphotyrosine; by autocatalysis modification.

It belongs to the protein kinase superfamily. Tyr protein kinase family. Fibroblast growth factor receptor subfamily. In terms of tissue distribution, in early embryos, expression is specific to mesodermal primordium and invaginated mesodermal cells. At later stages, expression is seen in putative muscle precursor cells and in the CNS.

The protein localises to the membrane. The catalysed reaction is L-tyrosyl-[protein] + ATP = O-phospho-L-tyrosyl-[protein] + ADP + H(+). Functionally, may be required for patterning of muscle precursor cells. May be essential for generation of mesodermal and endodermal layers, invaginations of various types of cells and CNS formation. The protein is Fibroblast growth factor receptor homolog 1 (htl) of Drosophila melanogaster (Fruit fly).